We begin with the raw amino-acid sequence, 383 residues long: MFVYYCKECFIMNKQQSKVRYSIRKVSIGILSISIGMFLALGMSNKAYADEIDKSKDFTRGYEQNVFAKSELNANKNTTKDKIKNEGAVKTSDTSLKLDNKSAISNGNEINQDIKISNTPKNSSQGNNLVINNNELTKEIKIANLEAQNSNQKKTNKVTNNYFGYYSFREAPKTQIYTVKKGDTLSAIALKYKTTVSNIQNTNNIANPNLIFIGQKLKVPMTPLVEPKPKTVSSNNKSNSNSSTLNYLKTLENRGWDFDGSYGWQCFDLVNVYWNHLYGHGLKGYGAKDIPYANNFNSEAKIYHNTPTFKAEPGDLVVFSGRFGGGYGHTAIVLNGDYDGKLMKFQSLDQNWNNGGWRKAEVAHKVVHNYENDMIFIRPFKKA.

An N-terminal signal peptide occupies residues M1–A49. The region spanning Q175–V219 is the LysM domain. Positions N241–R378 constitute a Peptidase C51 domain.

It is found in the secreted. Probably involved in peptidoglycan hydrolysis. This is Probable cell wall hydrolase LytN (lytN) from Staphylococcus aureus (strain NCTC 8325 / PS 47).